Reading from the N-terminus, the 465-residue chain is Opioid growth factor receptor-like protein 1 (465 aa).

2 disordered regions span residues 1 to 89 (MGNL…GNAK) and 309 to 465 (ENFI…TSSG). 4 stretches are compositionally biased toward basic and acidic residues: residues 48 to 59 (REQPEQPPERAG), 316 to 325 (PKKEQPERSK), 363 to 396 (TVEEKKVASREPGEETDKPSPEASSEDTKPRNSE), and 426 to 440 (SEKDGEGENQSKDSE). The span at 442 to 465 (PENTSCHAEVVSQQNVTNPQTSSG) shows a compositional bias: polar residues.

The protein belongs to the opioid growth factor receptor family.

The chain is Opioid growth factor receptor-like protein 1 (Ogfrl1) from Rattus norvegicus (Rat).